A 643-amino-acid chain; its full sequence is 1-deoxy-D-xylulose-5-phosphate synthase (643 aa).

Residues H72 and G113 to A115 contribute to the thiamine diphosphate site. D144 is a binding site for Mg(2+). Thiamine diphosphate contacts are provided by residues G145–A146, N174, Y287, and E370. N174 lines the Mg(2+) pocket.

Belongs to the transketolase family. DXPS subfamily. In terms of assembly, homodimer. Mg(2+) is required as a cofactor. The cofactor is thiamine diphosphate.

The enzyme catalyses D-glyceraldehyde 3-phosphate + pyruvate + H(+) = 1-deoxy-D-xylulose 5-phosphate + CO2. The protein operates within metabolic intermediate biosynthesis; 1-deoxy-D-xylulose 5-phosphate biosynthesis; 1-deoxy-D-xylulose 5-phosphate from D-glyceraldehyde 3-phosphate and pyruvate: step 1/1. Its function is as follows. Catalyzes the acyloin condensation reaction between C atoms 2 and 3 of pyruvate and glyceraldehyde 3-phosphate to yield 1-deoxy-D-xylulose-5-phosphate (DXP). The chain is 1-deoxy-D-xylulose-5-phosphate synthase from Parasynechococcus marenigrum (strain WH8102).